We begin with the raw amino-acid sequence, 1231 residues long: Multifunctional 2-oxoglutarate metabolism enzyme (1231 aa).

Residues Met1–Ser41 form a 2-oxoglutarate dehydrogenase E1, N-terminal part region. The disordered stretch occupies residues Val38–Ala79. The tract at residues Pro42–Ala88 is linker. A compositionally biased stretch (low complexity) spans Pro58–Pro69. The succinyltransferase E2 stretch occupies residues Leu89 to Ser337. His316 serves as the catalytic Proton acceptor; for succinyltransferase activity. Residues Asp338–Gly1231 are 2-oxoglutarate dehydrogenase E1, C-terminal part. Residue Arg542 participates in thiamine diphosphate binding. The 2-oxoglutarate site is built by His581 and Ser606. The thiamine diphosphate site is built by Ser606, Leu608, Asp649, Ala650, Ala651, and Asn682. Position 649 (Asp649) interacts with Mg(2+). Positions 682 and 684 each coordinate Mg(2+). The stretch at Asp787 to His817 forms a coiled coil. His1024 is a binding site for 2-oxoglutarate. Residues Thr1042, Arg1058, Lys1093, Ser1096, Gln1146, Arg1153, and Arg1154 each coordinate acetyl-CoA.

It belongs to the 2-oxoacid dehydrogenase family. Kgd subfamily. As to quaternary structure, homodimer. The 2-oxoglutarate dehydrogenase (ODH) complex contains multiple copies of three enzymatic components: 2-oxoglutarate dehydrogenase (E1), dihydrolipoamide succinyltransferase (E2) and lipoamide dehydrogenase (E3). Mg(2+) serves as cofactor. Thiamine diphosphate is required as a cofactor.

The catalysed reaction is glyoxylate + 2-oxoglutarate + H(+) = 2-hydroxy-3-oxoadipate + CO2. It carries out the reaction 2-oxoglutarate + H(+) = succinate semialdehyde + CO2. The enzyme catalyses N(6)-[(R)-lipoyl]-L-lysyl-[protein] + 2-oxoglutarate + H(+) = N(6)-[(R)-S(8)-succinyldihydrolipoyl]-L-lysyl-[protein] + CO2. It catalyses the reaction N(6)-[(R)-dihydrolipoyl]-L-lysyl-[protein] + succinyl-CoA = N(6)-[(R)-S(8)-succinyldihydrolipoyl]-L-lysyl-[protein] + CoA. It participates in carbohydrate metabolism; tricarboxylic acid cycle; succinate from 2-oxoglutarate (transferase route): step 1/2. The protein operates within carbohydrate metabolism; tricarboxylic acid cycle; succinyl-CoA from 2-oxoglutarate (dehydrogenase route): step 1/1. Its activity is regulated as follows. Alpha-ketoglutarate dehydrogenase and decarboxylase activities are inhibited by unphosphorylated GarA, and allosterically activated by acetyl-CoA, the main substrate of the TCA cycle. Its function is as follows. Shows three enzymatic activities that share a first common step, the attack of thiamine-PP on 2-oxoglutarate (alpha-ketoglutarate, KG), leading to the formation of an enamine-thiamine-PP intermediate upon decarboxylation. Thus, displays KGD activity, catalyzing the decarboxylation from five-carbon 2-oxoglutarate to four-carbon succinate semialdehyde (SSA). Also catalyzes C-C bond formation between the activated aldehyde formed after decarboxylation of alpha-ketoglutarate and the carbonyl of glyoxylate (GLX), to yield 2-hydroxy-3-oxoadipate (HOA), which spontaneously decarboxylates to form 5-hydroxylevulinate (HLA). And is also a component of the 2-oxoglutarate dehydrogenase (ODH) complex, that catalyzes the overall conversion of 2-oxoglutarate to succinyl-CoA and CO(2). The KG decarboxylase and KG dehydrogenase reactions provide two alternative, tightly regulated, pathways connecting the oxidative and reductive branches of the TCA cycle. This is Multifunctional 2-oxoglutarate metabolism enzyme (kgd) from Mycobacterium tuberculosis (strain ATCC 25177 / H37Ra).